Here is a 248-residue protein sequence, read N- to C-terminus: Probable transcriptional regulatory protein FTN_1028 (248 aa).

This sequence belongs to the TACO1 family.

The protein localises to the cytoplasm. This Francisella tularensis subsp. novicida (strain U112) protein is Probable transcriptional regulatory protein FTN_1028.